Consider the following 372-residue polypeptide: Probable L-tyrosine/L-aspartate decarboxylase (372 aa).

At Lys215 the chain carries N6-(pyridoxal phosphate)lysine.

The protein belongs to the group II decarboxylase family. MfnA subfamily. Requires pyridoxal 5'-phosphate as cofactor.

It carries out the reaction L-tyrosine + H(+) = tyramine + CO2. The catalysed reaction is L-aspartate + H(+) = beta-alanine + CO2. The protein operates within cofactor biosynthesis; methanofuran biosynthesis. Its pathway is cofactor biosynthesis; coenzyme A biosynthesis. Its function is as follows. Catalyzes the decarboxylation of L-tyrosine to produce tyramine for methanofuran biosynthesis. Can also catalyze the decarboxylation of L-aspartate to produce beta-alanine for coenzyme A (CoA) biosynthesis. The chain is Probable L-tyrosine/L-aspartate decarboxylase from Methanopyrus kandleri (strain AV19 / DSM 6324 / JCM 9639 / NBRC 100938).